The sequence spans 349 residues: 2-oxoglutarate and iron-dependent oxygenase domain-containing protein 2 (349 aa).

Residues 211–305 (DSHRAFVVKY…RWNLILWMRA (95 aa)) form the Fe2OG dioxygenase domain. Residues H231, D233, and H286 each contribute to the Fe cation site. Residue R296 coordinates 2-oxoglutarate.

This sequence belongs to the OGFOD2 family. Fe(2+) serves as cofactor. L-ascorbate is required as a cofactor.

This chain is 2-oxoglutarate and iron-dependent oxygenase domain-containing protein 2 (ogfod2), found in Xenopus tropicalis (Western clawed frog).